The chain runs to 360 residues: Probable protein phosphatase 2C 54 (360 aa).

A disordered region spans residues 1–39; the sequence is MCVEESEGAERLDFGEPAAAAADAGKSKSKSPDELPSPR. One can recognise a PPM-type phosphatase domain in the interval 65–325; sequence RSGDWSDIGG…DNLTAVLVSF (261 aa). 4 residues coordinate Mn(2+): Asp-109, Gly-110, Asp-273, and Asp-316.

This sequence belongs to the PP2C family. Mg(2+) serves as cofactor. Requires Mn(2+) as cofactor.

It carries out the reaction O-phospho-L-seryl-[protein] + H2O = L-seryl-[protein] + phosphate. The catalysed reaction is O-phospho-L-threonyl-[protein] + H2O = L-threonyl-[protein] + phosphate. The sequence is that of Probable protein phosphatase 2C 54 from Oryza sativa subsp. japonica (Rice).